The sequence spans 430 residues: UDP-N-acetylglucosamine 1-carboxyvinyltransferase 1 (430 aa).

22–23 contacts phosphoenolpyruvate; the sequence is KN. Arginine 93 lines the UDP-N-acetyl-alpha-D-glucosamine pocket. The active-site Proton donor is the cysteine 117. Position 117 is a 2-(S-cysteinyl)pyruvic acid O-phosphothioketal (cysteine 117). Residues 122 to 126, aspartate 305, and valine 327 contribute to the UDP-N-acetyl-alpha-D-glucosamine site; that span reads RPVDL.

This sequence belongs to the EPSP synthase family. MurA subfamily.

It is found in the cytoplasm. It catalyses the reaction phosphoenolpyruvate + UDP-N-acetyl-alpha-D-glucosamine = UDP-N-acetyl-3-O-(1-carboxyvinyl)-alpha-D-glucosamine + phosphate. It participates in cell wall biogenesis; peptidoglycan biosynthesis. Its function is as follows. Cell wall formation. Adds enolpyruvyl to UDP-N-acetylglucosamine. In Listeria monocytogenes serovar 1/2a (strain ATCC BAA-679 / EGD-e), this protein is UDP-N-acetylglucosamine 1-carboxyvinyltransferase 1.